A 417-amino-acid polypeptide reads, in one-letter code: NADH-quinone oxidoreductase subunit D (417 aa).

The protein belongs to the complex I 49 kDa subunit family. As to quaternary structure, NDH-1 is composed of 14 different subunits. Subunits NuoB, C, D, E, F, and G constitute the peripheral sector of the complex.

It is found in the cell inner membrane. The catalysed reaction is a quinone + NADH + 5 H(+)(in) = a quinol + NAD(+) + 4 H(+)(out). Its function is as follows. NDH-1 shuttles electrons from NADH, via FMN and iron-sulfur (Fe-S) centers, to quinones in the respiratory chain. The immediate electron acceptor for the enzyme in this species is believed to be ubiquinone. Couples the redox reaction to proton translocation (for every two electrons transferred, four hydrogen ions are translocated across the cytoplasmic membrane), and thus conserves the redox energy in a proton gradient. The sequence is that of NADH-quinone oxidoreductase subunit D from Francisella tularensis subsp. novicida (strain U112).